Consider the following 96-residue polypeptide: Cobalt transport protein CbiN (96 aa).

Helical transmembrane passes span Trp-4 to Gly-24 and Ile-59 to Leu-79.

The protein belongs to the CbiN family. Forms an energy-coupling factor (ECF) transporter complex composed of an ATP-binding protein (A component, CbiO), a transmembrane protein (T component, CbiQ) and 2 possible substrate-capture proteins (S components, CbiM and CbiN) of unknown stoichimetry.

The protein localises to the cell membrane. It participates in cofactor biosynthesis; adenosylcobalamin biosynthesis. Functionally, part of the energy-coupling factor (ECF) transporter complex CbiMNOQ involved in cobalt import. In Halobacterium salinarum (strain ATCC 29341 / DSM 671 / R1), this protein is Cobalt transport protein CbiN.